We begin with the raw amino-acid sequence, 454 residues long: Probable ECA polymerase (454 aa).

A run of 11 helical transmembrane segments spans residues 6–26 (FSGL…LTWF), 37–57 (VFFS…TSIL), 63–83 (VAVV…CFYA), 122–142 (MMAV…FLLF), 157–177 (GVAL…VYFL), 183–203 (AWLF…MIVG), 209–229 (IIIA…ISPG), 230–250 (MLAA…LKRY), 343–363 (LVVM…GLII), 380–400 (YKAA…IVLA), and 411–431 (VIFF…IYWL).

It belongs to the WzyE family. As to quaternary structure, probably part of a complex composed of WzxE, WzyE and WzzE.

Its subcellular location is the cell inner membrane. Its pathway is bacterial outer membrane biogenesis; enterobacterial common antigen biosynthesis. In terms of biological role, probably involved in the polymerization of enterobacterial common antigen (ECA) trisaccharide repeat units. This Cronobacter sakazakii (strain ATCC BAA-894) (Enterobacter sakazakii) protein is Probable ECA polymerase.